Reading from the N-terminus, the 379-residue chain is Alcohol dehydrogenase 1 (379 aa).

Zn(2+)-binding residues include cysteine 47, threonine 49, histidine 69, cysteine 99, cysteine 102, cysteine 105, cysteine 113, and cysteine 177. An alcohol contacts are provided by threonine 49 and histidine 69. Threonine 49 serves as a coordination point for NAD(+). NAD(+) is bound by residues 202–207 (GLGAVG), aspartate 226, arginine 231, threonine 272, valine 295, 295–297 (VGV), phenylalanine 322, and arginine 372.

This sequence belongs to the zinc-containing alcohol dehydrogenase family. As to quaternary structure, homodimer. Zn(2+) is required as a cofactor.

It is found in the cytoplasm. The catalysed reaction is a primary alcohol + NAD(+) = an aldehyde + NADH + H(+). It catalyses the reaction a secondary alcohol + NAD(+) = a ketone + NADH + H(+). The sequence is that of Alcohol dehydrogenase 1 (ADH1) from Cenchrus americanus (Pearl millet).